The following is a 373-amino-acid chain: tRNA-specific 2-thiouridylase MnmA (373 aa).

ATP is bound by residues Gly12–Ser19 and Met38. The interaction with target base in tRNA stretch occupies residues Asn98–Asp100. Cys103 serves as the catalytic Nucleophile. A disulfide bond links Cys103 and Cys200. Position 127 (Gly127) interacts with ATP. Positions Lys150 to Gln152 are interaction with tRNA. Cys200 acts as the Cysteine persulfide intermediate in catalysis. An interaction with tRNA region spans residues Arg312 to Tyr313.

It belongs to the MnmA/TRMU family.

Its subcellular location is the cytoplasm. The enzyme catalyses S-sulfanyl-L-cysteinyl-[protein] + uridine(34) in tRNA + AH2 + ATP = 2-thiouridine(34) in tRNA + L-cysteinyl-[protein] + A + AMP + diphosphate + H(+). Functionally, catalyzes the 2-thiolation of uridine at the wobble position (U34) of tRNA, leading to the formation of s(2)U34. The polypeptide is tRNA-specific 2-thiouridylase MnmA (Streptococcus pyogenes serotype M12 (strain MGAS2096)).